The following is a 1109-amino-acid chain: MGFNEFLSSIFGNKSTRDMKEIQPWVDKIKAAYPEVAKLDNDGLRAKTEELKEYIRNSASKERAKADELRAGIENVELEDREEVFAQIDKIEKEILEIYEKALDEVLPVAFSIVKESAKRFSENEEIVVTATDFDRKLAATKDFVRIEGDKAIWQNHWNAGGNDTVWNMVHYDVQLFGGVVLHKGKIAEMATGEGKTLVATLPVFLNALTGNGVHVVTVNDYLAKRDSEWMGPLYMFHGLSVDCIDRHQPNSDARRQAYLADITFGTNNEFGFDYLRDNMAISPKDLVQRQHNYAIVDEVDSVLIDDARTPLIISGPVPKGEDQLFDQLRPLVERLVEAQKVLATKYLSEAKKLINSDDKKEVEEGFLALFRSHKALPKNKALIKFLSEQGIKAGMLKTEEIYMEQNNKRMHEATDPLYFVIDEKLNSVDLTDKGVDLITGNSEDPTLFVLPDIAAQLSELENEHGLSDEQKLEKKDALLTNYAIKSERVHTINQLLKAYTMFEKDDEYVVIDGQVKIVDEQTGRIMEGRRYSDGLHQAIEAKEGVKVEAATQTFATITLQNYFRMYHKLSGMTGTAETEAGELWDIYKLDVVVIPTNRPIARKDMNDRVYKTKREKYKAVIEEIEQLVQAGRPVLVGTTSVEISEMLSKMLTMRKIEHNVLNAKLHQKEADIVAKAGLSGTVTIATNMAGRGTDIKLSPEVKAAGGLAIIGTERHESRRVDRQLRGRAGRQGDPGSSVFFVSLEDDLMRLFSSDRIASVMDKLGFQEGEMIEHKMISNSIERAQKKVEENNFGIRKRLLEYDDVMNKQRTVVYTKRRHALMGERIGMDIVNMIWDRCAAAIENNADYEECKLDLLQTLAMEAPFTEEEFRNEKKDKLADKTFDVAMANFKRKTERLAQIANPVIKQVYENQGHMYENILIPITDGKRMYNISCNLKAAYESESKEVVKSFEKSILLHVIDESWKENLRELDELKHSVQNASYEQKDPLLIYKLESVTLFDNMVNKINNQTVSILMRGQIPVAEPTEEQQEAARRVEVRQAAPEQRQDMSKYREQKQDLNDPNQQAAAQQDTREAVKREPIRAEKTVGRNDPCPCGSGKKYKNCHGRNS.

ATP is bound by residues glutamine 175, 193–197 (GEGKT), and aspartate 695. A disordered region spans residues 1038 to 1109 (VRQAAPEQRQ…KYKNCHGRNS (72 aa)). 2 stretches are compositionally biased toward basic and acidic residues: residues 1045-1059 (QRQDMSKYREQKQDL) and 1071-1088 (DTREAVKREPIRAEKTVG). Positions 1093, 1095, 1104, and 1105 each coordinate Zn(2+). Over residues 1099 to 1109 (KKYKNCHGRNS) the composition is skewed to basic residues.

This sequence belongs to the SecA family. In terms of assembly, monomer and homodimer. Part of the essential Sec protein translocation apparatus which comprises SecA, SecYEG and auxiliary proteins SecDF. Other proteins may also be involved. The cofactor is Zn(2+).

It is found in the cell inner membrane. The protein localises to the cytoplasm. The enzyme catalyses ATP + H2O + cellular proteinSide 1 = ADP + phosphate + cellular proteinSide 2.. Part of the Sec protein translocase complex. Interacts with the SecYEG preprotein conducting channel. Has a central role in coupling the hydrolysis of ATP to the transfer of proteins into and across the cell membrane, serving as an ATP-driven molecular motor driving the stepwise translocation of polypeptide chains across the membrane. This chain is Protein translocase subunit SecA, found in Bacteroides fragilis (strain ATCC 25285 / DSM 2151 / CCUG 4856 / JCM 11019 / LMG 10263 / NCTC 9343 / Onslow / VPI 2553 / EN-2).